Reading from the N-terminus, the 505-residue chain is MDKFQIDKNKHRPWQQCFLYPVLFQEDLYAIAHDNDLDKSSFSEPLENFLSKEFSFLTVKRLIRRIRQQNNSIVLSGNCDPNEMINRNQNSYSELILESLAVVSEVSFSMRSKPFLEGINEWKSFRSIHCLFPFMEDKLPHTNYISDIRIPYSIHPEILVRTFRRWMRDVPSLHLLRSILHEWRDSSSTENLQKALVVSGEKTKFSLFLWNSYVYEWESILIPLLKRSSHSRSLLSGFFPDRTLFDQKIKHIVVFPHQISTKRIWLLKDPFIHYLRYEERSLLVLKGTQLQVKKCRYHLFKFWQCSFHLWAQPYRIWIHELSKNCSSFLGYFLSVKMKPLVVRAKMLDRLFINDLITNELRPIAPISSIIRFFAKERFCVISGRPISKLAWTSLTDDDILDRFDRIWRNLFHHYSGSFNQEGLYYIKYILLLSCAKTLACKHKSTIRVVREELGSELFTKSFSKKREFISSSFSKTSSQRELNWNGDILQINPLANSWQKIQNKK.

This sequence belongs to the intron maturase 2 family. MatK subfamily.

Its subcellular location is the plastid. It localises to the chloroplast. In terms of biological role, usually encoded in the trnK tRNA gene intron. Probably assists in splicing its own and other chloroplast group II introns. The chain is Maturase K from Sciadopitys verticillata (Japanese umbrella-pine).